Here is a 442-residue protein sequence, read N- to C-terminus: Protein bangles and beads (442 aa).

Positions 47 to 442 (AVEPAPLKPE…SEESSESKEN (396 aa)) are disordered. Basic and acidic residues-rich tracts occupy residues 55–67 (PEAE…KTIE), 114–125 (PEKKTLPEEAKP), and 133–146 (EAEK…RTEA). A compositionally biased stretch (low complexity) spans 159–172 (AIEQAPEAPAANAE). Composition is skewed to basic and acidic residues over residues 177–194 (VVDE…KSAE) and 204–240 (AEKE…EPAK). Composition is skewed to low complexity over residues 241-255 (AAEA…AATK) and 272-288 (SSPA…AAQA). A compositionally biased stretch (basic and acidic residues) spans 329–339 (EAVKEQEKEQP). The span at 357–376 (TAAPAGAPEPTAAVAPAAVP) shows a compositional bias: low complexity. Basic and acidic residues predominate over residues 408 to 442 (EPKKSSEEKSDKSESKVDESSESKESEESSESKEN). Phosphoserine occurs at positions 430, 433, 436, and 437.

In terms of tissue distribution, expressed in the embryonic CNS, in sets of cells that are segmentally reiterated along the periphery of the nervous system.

Its function is as follows. May play an important role during development. This is Protein bangles and beads (bnb) from Drosophila melanogaster (Fruit fly).